The primary structure comprises 500 residues: L-arabinose isomerase (500 aa).

Mn(2+) contacts are provided by glutamate 306, glutamate 333, histidine 349, and histidine 448.

It belongs to the arabinose isomerase family. Mn(2+) is required as a cofactor.

The enzyme catalyses beta-L-arabinopyranose = L-ribulose. It functions in the pathway carbohydrate degradation; L-arabinose degradation via L-ribulose; D-xylulose 5-phosphate from L-arabinose (bacterial route): step 1/3. In terms of biological role, catalyzes the conversion of L-arabinose to L-ribulose. This is L-arabinose isomerase from Shewanella sp. (strain ANA-3).